The following is a 388-amino-acid chain: Processive diacylglycerol beta-glucosyltransferase (388 aa).

Belongs to the glycosyltransferase 28 family. UgtP subfamily.

It is found in the cell membrane. The catalysed reaction is a 1,2-diacyl-3-O-(beta-D-glucopyranosyl)-sn-glycerol + UDP-alpha-D-glucose = a 1,2-diacyl-3-O-(beta-D-Glc-(1-&gt;6)-beta-D-Glc)-sn-glycerol + UDP + H(+). It carries out the reaction a 1,2-diacyl-3-O-(beta-D-Glc-(1-&gt;6)-beta-D-Glc)-sn-glycerol + UDP-alpha-D-glucose = a 1,2-diacyl-3-O-(beta-D-Glc-(1-&gt;6)-beta-D-Glc-(1-&gt;6)-beta-D-Glc)-sn-glycerol + UDP + H(+). It catalyses the reaction a 1,2-diacyl-sn-glycerol + UDP-alpha-D-glucose = a 1,2-diacyl-3-O-(beta-D-glucopyranosyl)-sn-glycerol + UDP + H(+). The protein operates within glycolipid metabolism; diglucosyl-diacylglycerol biosynthesis. Processive glucosyltransferase involved in the biosynthesis of both the bilayer- and non-bilayer-forming membrane glucolipids. Is able to successively transfer up to three glucosyl residues to diacylglycerol (DAG), thereby catalyzing the formation of beta-monoglucosyl-DAG (3-O-(beta-D-glucopyranosyl)-1,2-diacyl-sn-glycerol), beta-diglucosyl-DAG (3-O-(beta-D-glucopyranosyl-beta-(1-&gt;6)-D-glucopyranosyl)-1,2-diacyl-sn-glycerol) and beta-triglucosyl-DAG (3-O-(beta-D-glucopyranosyl-beta-(1-&gt;6)-D-glucopyranosyl-beta-(1-&gt;6)-D-glucopyranosyl)-1,2-diacyl-sn-glycerol). Beta-diglucosyl-DAG is the predominant glycolipid found in Bacillales and is also used as a membrane anchor for lipoteichoic acid (LTA). The polypeptide is Processive diacylglycerol beta-glucosyltransferase (Bacillus mycoides (strain KBAB4) (Bacillus weihenstephanensis)).